A 180-amino-acid chain; its full sequence is MHNLLSRANALLAFTLWVMAAVTAACFLSTVFLDYTVPTKLTVNDVKVRNVVDYATDEQQADLATLNFNLKVDFSKIFNWNVKQLFVYLVAEYKSKVNEVNQVVLWDRIVERADRVVMDEIGVKSKYYFLDDGTNLLNHKNVTFVLRYNVIPNSGYLRLVQSSDQVVVPFPTTYTTTRRS.

The Cytoplasmic segment spans residues 1–12; that stretch reads MHNLLSRANALL. Residues 13-33 form a helical; Signal-anchor for type II membrane protein membrane-spanning segment; the sequence is AFTLWVMAAVTAACFLSTVFL. Residues 34 to 180 are Lumenal-facing; sequence DYTVPTKLTV…PTTYTTTRRS (147 aa). N-linked (GlcNAc...) asparagine glycosylation occurs at Asn141.

The protein belongs to the SPCS3 family. As to quaternary structure, component of the signal peptidase complex (SPC) composed of a catalytic subunit sec-11 and three accessory subunits spcs-1, spcs-2 and spcs-3. The complex induces a local thinning of the ER membrane which is used to measure the length of the signal peptide (SP) h-region of protein substrates. This ensures the selectivity of the complex towards h-regions shorter than 18-20 amino acids.

The protein resides in the endoplasmic reticulum membrane. Its function is as follows. Essential component of the signal peptidase complex (SPC) which catalyzes the cleavage of N-terminal signal sequences from nascent proteins as they are translocated into the lumen of the endoplasmic reticulum. Essential for the SPC catalytic activity, possibly by stabilizing and positioning the active center of the complex close to the lumenal surface. The chain is Signal peptidase complex subunit 3 from Caenorhabditis elegans.